The following is a 218-amino-acid chain: MALVPYEESAAIGLQKFHKPLATFSFANHTIQIRQDWRQLGVAAVVWDAAVVLSMYLEMGAVELRGCSAVELGAGTGLVGIVAALLGAQVTITDRKVALEFLKSNVEANLPPHIQPKAVVKELTWGQNLESFSPGEFDLILGADVIYLEDTFTDLLQTLGHLCSNNSVILLACRIRYERDSNFLTMLERQFTVSKVHYDPEKDVHIYKAQKRNQREDL.

S-adenosyl-L-methionine is bound by residues W47, 73-75 (GAG), D94, W125, and A143.

The protein belongs to the methyltransferase superfamily. METTL21 family. As to quaternary structure, interacts with heat shock 70 family members; at least some of these proteins are methylation substrates.

The protein resides in the cytoplasm. It carries out the reaction L-lysyl-[protein] + 3 S-adenosyl-L-methionine = N(6),N(6),N(6)-trimethyl-L-lysyl-[protein] + 3 S-adenosyl-L-homocysteine + 3 H(+). Its function is as follows. Protein-lysine methyltransferase that selectively trimethylates residues in heat shock protein 70 (HSP70) family members. Contributes to the in vivo trimethylation of Lys residues in HSPA1 and HSPA8. In vitro methylates 'Lys-561' in HSPA1, 'Lys-564' in HSPA2, 'Lys-585' in HSPA5, 'Lys-563' in HSPA6 and 'Lys-561' in HSPA8. The chain is Protein N-lysine methyltransferase METTL21A (Mettl21A) from Mus musculus (Mouse).